The primary structure comprises 367 residues: Zinc transport system membrane protein TroD (367 aa).

Transmembrane regions (helical) follow at residues 5-25 (VVLIAVVVSVACALCGVFLVL), 28-48 (ISLMSDAISHSVILGIVLGYF), 56-76 (FVPFVGAVIAGICSVICAELL), 87-107 (AVGLVFPAMFGLGVILVSLYA), 140-160 (SLVQMGSVLCGLLLLLALFFK), 170-190 (VLATSLGFSPTLINYGLMLAV), 201-221 (VGAVLVIALMITPPAAALLLT), 224-244 (LLLMLVLASLLASCASISGLF), and 251-271 (GSIAGAMATMAGVLFALVYLF).

Belongs to the ABC-3 integral membrane protein family.

Its subcellular location is the cell membrane. In terms of biological role, part of an ATP-driven transport system TroABCD for zinc. The chain is Zinc transport system membrane protein TroD (troD) from Treponema pallidum (strain Nichols).